We begin with the raw amino-acid sequence, 90 residues long: MKMANSLRGEVLKLYKNLLYLGRDYPKGADYFKKRLKNIFLKNKDVKNPEKIKELIAQGEFVMKELEALYFLRKYRAMKQRYYSDTNKTN.

It belongs to the complex I LYR family. Homotetramer. Interacts with NDUFAB1. Interacts with ETFA. Interacts with ETFB.

The protein resides in the mitochondrion. Functionally, acts as a regulator of the electron transfer flavoprotein by promoting the removal of flavin from the ETF holoenzyme (composed of ETFA and ETFB). This chain is Electron transfer flavoprotein regulatory factor 1, found in Homo sapiens (Human).